Consider the following 210-residue polypeptide: MTDPITPHPGENQAAKLEKLRTALEEFSRRQEEGAASSLFDREAEEKKAEVRRRALLLLDQRARSRSELQGRLGALDFDHDIIEEVLDDLTRANLINDESFAQEWVRQRAQRRGKSTRVLDRELRDKGVDAGIRARALEQIDPEDERDTARAVAVKKARSESRIPADRSDYDKALRRVVGALARRGFPAGMSMDLAREALDERIEDLRQH.

The interval 28-47 (SRRQEEGAASSLFDREAEEK) is disordered.

The protein belongs to the RecX family.

The protein resides in the cytoplasm. In terms of biological role, modulates RecA activity. The polypeptide is Regulatory protein RecX (Corynebacterium efficiens (strain DSM 44549 / YS-314 / AJ 12310 / JCM 11189 / NBRC 100395)).